Consider the following 444-residue polypeptide: Deoxyguanosinetriphosphate triphosphohydrolase-like protein (444 aa).

A disordered region spans residues 1-26 (MIASPWHERRLNEDKKRRNDHRSPFQ). In terms of domain architecture, HD spans 59 to 250 (RLTHSLEVSQ…MELADDIAYA (192 aa)).

This sequence belongs to the dGTPase family. Type 2 subfamily.

The sequence is that of Deoxyguanosinetriphosphate triphosphohydrolase-like protein from Shewanella woodyi (strain ATCC 51908 / MS32).